Consider the following 408-residue polypeptide: Solute carrier family 35 member F1 (408 aa).

The tract at residues Met1–His21 is disordered. The next 10 helical transmembrane spans lie at Met60–Thr80, Val94–Val114, Trp129–Val147, Ile158–Leu178, Phe186–Val206, Leu221–Ile241, Val247–Ile267, Leu284–Ile304, Ser311–Phe331, and Phe335–Ser355.

It belongs to the SLC35F solute transporter family.

The protein localises to the cytoplasmic vesicle. The protein resides in the secretory vesicle. It localises to the synaptic vesicle membrane. Functionally, putative solute transporter. The sequence is that of Solute carrier family 35 member F1 (SLC35F1) from Homo sapiens (Human).